The following is a 303-amino-acid chain: Probable alpha-L-glutamate ligase 1 (303 aa).

An ATP-grasp domain is found at 104–287 (LQLLSRKGVG…IAGLIYSFIE (184 aa)). ATP contacts are provided by residues Lys141, 178–179 (EF), Asp187, and 211–213 (RSN). Mg(2+) contacts are provided by Asp248, Glu260, and Asn262. 3 residues coordinate Mn(2+): Asp248, Glu260, and Asn262.

The protein belongs to the RimK family. Mg(2+) is required as a cofactor. Requires Mn(2+) as cofactor.

The protein is Probable alpha-L-glutamate ligase 1 of Hahella chejuensis (strain KCTC 2396).